A 147-amino-acid polypeptide reads, in one-letter code: 3-dehydroquinate dehydratase (147 aa).

Tyr22 acts as the Proton acceptor in catalysis. Asn74, His80, and Asp87 together coordinate substrate. His101 (proton donor) is an active-site residue. Residues 102–103 (IS) and Arg112 contribute to the substrate site.

The protein belongs to the type-II 3-dehydroquinase family. In terms of assembly, homododecamer.

The enzyme catalyses 3-dehydroquinate = 3-dehydroshikimate + H2O. It functions in the pathway metabolic intermediate biosynthesis; chorismate biosynthesis; chorismate from D-erythrose 4-phosphate and phosphoenolpyruvate: step 3/7. Catalyzes a trans-dehydration via an enolate intermediate. This Lachnospira eligens (strain ATCC 27750 / DSM 3376 / VPI C15-48 / C15-B4) (Eubacterium eligens) protein is 3-dehydroquinate dehydratase.